We begin with the raw amino-acid sequence, 278 residues long: MTIRIPSGEEADYTLHLPRILCLHGGGTNARIFRMQCRVLERFLRSTFRFVYAEAPFAAQPGSDVTSVYKDHGPFKAWLRCTAADPDRSAQEVVKKINLSIATAMYDDDMRGATGEWIALLGFSQGAKVAASILYAQQTIQQRLGERAATRPRFRFAVLMAGRGPLVWLLPETSSGPGSIPMGLVDAASPSMLDSEPELPTDSTEHMLRLPTLHVHGLRDPGLSLHRRLLRSYCQSDSVSLVEWEGEHRVPLKTKDVTAVVDQIYALARDTGVLDSWC.

Residues serine 124, aspartate 220, and histidine 248 each act as charge relay system in the active site.

This sequence belongs to the LovG family.

Its pathway is secondary metabolite biosynthesis. Esterase; part of the gene cluster that mediates the biosynthesis of the antibiotic 2,4-dihydroxy-3-methyl-6-(2-oxopropyl)benzaldehyde (DHMBA) and its derivatives. The direct non-reducing polyketide synthase dbaI product is 2,4-dihydroxy-3-methyl-6-(2-oxopropyl)benzaldehyde (DHMBA), produced by condensation of one acetyl-CoA starter unit with 4 malonyl-CoA units and one methylation step. The FAD-dependent monooxygenase dbaH is responsible for the synthesis of yellow pigments derived from the oxidation of DHMBA. The roles of dbaB, C, E and F have still to be determined. This Emericella nidulans (strain FGSC A4 / ATCC 38163 / CBS 112.46 / NRRL 194 / M139) (Aspergillus nidulans) protein is Esterase dbaE.